The following is a 294-amino-acid chain: Glycine--tRNA ligase alpha subunit (294 aa).

It belongs to the class-II aminoacyl-tRNA synthetase family. As to quaternary structure, tetramer of two alpha and two beta subunits.

It localises to the cytoplasm. The catalysed reaction is tRNA(Gly) + glycine + ATP = glycyl-tRNA(Gly) + AMP + diphosphate. The polypeptide is Glycine--tRNA ligase alpha subunit (Trichormus variabilis (strain ATCC 29413 / PCC 7937) (Anabaena variabilis)).